A 60-amino-acid polypeptide reads, in one-letter code: Cytotoxin 1 (60 aa).

Cystine bridges form between C3-C21, C14-C38, C42-C53, and C54-C59.

It belongs to the three-finger toxin family. Short-chain subfamily. Type IA cytotoxin sub-subfamily. Monomer, or heterodimer with alpha-cobratoxin (AC P01391); disulfide-linked. In terms of tissue distribution, expressed by the venom gland.

It is found in the secreted. The protein resides in the target cell membrane. Its function is as follows. Monomer: shows cytolytic activity (apoptosis is induced in C2C12 cells, but no cytotoxicity is observed on INS-1E). In addition, this toxin shows insulinotropic activity that may be mediated by the modulation of potassium channels (Kv). It induces the increase of intracellular calcium release. It induces insulin secretion from rat INS-1E cells in absence and in presence of glucose, without affecting cell viability and integrity. In presence of glucose, the insulinotropic activity is increased, suggesting a possible synergistic effect with glucose. Its insulinotropic activity does not involve GLP-1R signaling. Heterodimer: has no cytolytic activity, but retains most of the alpha-cobratoxin capacity to compete with alpha-bungarotoxin for binding to Torpedo and alpha-7/CHRNA7 nicotinic acetylcholine receptors (nAChRs) as well as to Lymnea stagnalis acetylcholine-binding protein. In Naja kaouthia (Monocled cobra), this protein is Cytotoxin 1.